The chain runs to 1398 residues: DNA topoisomerase 2 (1398 aa).

Residues asparagine 69, asparagine 103, 131–133 (SDN), and 144–151 (GRNGFGAK) contribute to the ATP site. The segment at 260–317 (NSNDNKNNKGQNDNNNNNNNNNDENANQNNDNLDVSLSNEPADGTPTKNNNNNNNNND) is disordered. Over residues 267-291 (NKGQNDNNNNNNNNNDENANQNNDN) the composition is skewed to low complexity. Position 411-413 (411-413 (QTK)) interacts with ATP. The Toprim domain maps to 493–608 (CTLILTEGDS…SLLKHKGFLS (116 aa)). Residues glutamate 499, aspartate 577, and aspartate 579 each coordinate Mg(2+). A Topo IIA-type catalytic domain is found at 739–1191 (IPNIMDGWKP…TVETMWLKDI (453 aa)). Tyrosine 830 (O-(5'-phospho-DNA)-tyrosine intermediate) is an active-site residue. Positions 1012–1021 (KLKSTLTTTN) are interaction with DNA. Disordered stretches follow at residues 1214–1250 (KFKVARKQGPSSMKKKKKKKKLSSDEESEGGDTSDSS) and 1262–1361 (NTNK…NSSI). Low complexity predominate over residues 1262-1276 (NTNKKTTTSSNNVNN). 2 stretches are compositionally biased toward polar residues: residues 1287–1300 (LNSNELDNTLSVSK) and 1348–1357 (DSTNDNNSEL).

It belongs to the type II topoisomerase family. As to quaternary structure, homodimer. Mg(2+) serves as cofactor. Mn(2+) is required as a cofactor. Requires Ca(2+) as cofactor.

It localises to the nucleus. It catalyses the reaction ATP-dependent breakage, passage and rejoining of double-stranded DNA.. Its function is as follows. Control of topological states of DNA by transient breakage and subsequent rejoining of DNA strands. Topoisomerase II makes double-strand breaks. This chain is DNA topoisomerase 2 (TOP2), found in Plasmodium falciparum (isolate K1 / Thailand).